We begin with the raw amino-acid sequence, 142 residues long: General odorant-binding protein 99a (142 aa).

Residues 1–16 (MKVFVAICVLIGLASA) form the signal peptide. 3 disulfide bridges follow: C33–C64, C60–C116, and C105–C125.

This sequence belongs to the PBP/GOBP family. Expressed in larval chemosensory organ. Specifically expressed exclusively in a subset of chemosensory sensilla on the third antennal segment.

It is found in the secreted. In terms of biological role, present in the aqueous fluid surrounding olfactory sensory dendrites and are thought to aid in the capture and transport of hydrophobic odorants into and through this fluid. The sequence is that of General odorant-binding protein 99a (Obp99a) from Drosophila melanogaster (Fruit fly).